The primary structure comprises 153 residues: uncharacterized protein (153 aa).

Positions 1 to 22 (MKLLKKGTTVLFVMIMAVMLVA) are cleaved as a signal peptide. A lipid anchor (N-palmitoyl cysteine) is attached at Cys-23. Cys-23 carries S-diacylglycerol cysteine lipidation. Residues 121–153 (LPGMASTGDVSKGISMKESEKMLKSQGFKEVEK) form a disordered region. A compositionally biased stretch (basic and acidic residues) spans 135 to 153 (SMKESEKMLKSQGFKEVEK).

This sequence to E.coli YehR.

It is found in the cell membrane. This is an uncharacterized protein from Listeria innocua serovar 6a (strain ATCC BAA-680 / CLIP 11262).